Reading from the N-terminus, the 471-residue chain is Cysteine--tRNA ligase (471 aa).

A Zn(2+)-binding site is contributed by C29. The 'HIGH' region signature appears at 31–41 (PTVYDYFHIGN). C212, H237, and E241 together coordinate Zn(2+). The short motif at 269–273 (KMSKS) is the 'KMSKS' region element. K272 is a binding site for ATP.

This sequence belongs to the class-I aminoacyl-tRNA synthetase family. In terms of assembly, monomer. The cofactor is Zn(2+).

It is found in the cytoplasm. The enzyme catalyses tRNA(Cys) + L-cysteine + ATP = L-cysteinyl-tRNA(Cys) + AMP + diphosphate. The sequence is that of Cysteine--tRNA ligase from Symbiobacterium thermophilum (strain DSM 24528 / JCM 14929 / IAM 14863 / T).